The chain runs to 110 residues: MKYLAAYLLLTVGGKNSPSASDIESVLSTVGIESESERVEALIKELDGKDIDELIAAGNEKLATVPSGGAAAAAAPAAAGGAAPAAEEAAKEEAKEEEESDEDMGFGLFD.

A disordered region spans residues 83-110 (APAAEEAAKEEAKEEEESDEDMGFGLFD). Residues 95–104 (KEEEESDEDM) show a composition bias toward acidic residues. At serine 100 the chain carries Phosphoserine.

The protein belongs to the eukaryotic ribosomal protein P1/P2 family. Component of the large ribosomal subunit (LSU). Mature yeast ribosomes consist of a small (40S) and a large (60S) subunit. The 40S small subunit contains 1 molecule of ribosomal RNA (18S rRNA) and at least 33 different proteins. The large 60S subunit contains 3 rRNA molecules (25S, 5.8S and 5S rRNA) and at least 46 different proteins. The acidic ribosomal P-proteins form the stalk structure of the 60S subunit. They are organized as a pentameric complex in which uL10/P0 interacts with 2 heterodimers of P1 and P2 proteins.

Its subcellular location is the cytoplasm. Component of the ribosome, a large ribonucleoprotein complex responsible for the synthesis of proteins in the cell. The small ribosomal subunit (SSU) binds messenger RNAs (mRNAs) and translates the encoded message by selecting cognate aminoacyl-transfer RNA (tRNA) molecules. The large subunit (LSU) contains the ribosomal catalytic site termed the peptidyl transferase center (PTC), which catalyzes the formation of peptide bonds, thereby polymerizing the amino acids delivered by tRNAs into a polypeptide chain. The nascent polypeptides leave the ribosome through a tunnel in the LSU and interact with protein factors that function in enzymatic processing, targeting, and the membrane insertion of nascent chains at the exit of the ribosomal tunnel. The polypeptide is Large ribosomal subunit protein P2C (rpp203) (Schizosaccharomyces pombe (strain 972 / ATCC 24843) (Fission yeast)).